A 268-amino-acid chain; its full sequence is MNQLKIAVAGASGRMGHMLIETILEAQDATLTGALDIAASPAVGSDAAAFLGKPAGVLIESDFAKGLANSEFLIDFTRPEGTLQHLEYCAAHNIKMIIGTTGFDAAGKAAIAAAAEKTAIMFAPNMSVGVNVTMKLLEMAAKNFSEGYDIEIIEAHHRHKVDAPSGTAIKMGEVIAGALGKELNDVAVWAREGVTGARDPSSIGFATVRGGDIIGDHTVLFAGIGERIEISHKSSSRVSYAHGSLRAARFLADKKTGLYDMQDVLGLR.

Residues 10-15, D36, 99-101, and 123-126 each bind NAD(+); these read GASGRM, GTT, and APNM. H156 functions as the Proton donor/acceptor in the catalytic mechanism. H157 contacts (S)-2,3,4,5-tetrahydrodipicolinate. The active-site Proton donor is K160. Residue 166–167 participates in (S)-2,3,4,5-tetrahydrodipicolinate binding; sequence GT.

This sequence belongs to the DapB family.

The protein localises to the cytoplasm. The catalysed reaction is (S)-2,3,4,5-tetrahydrodipicolinate + NAD(+) + H2O = (2S,4S)-4-hydroxy-2,3,4,5-tetrahydrodipicolinate + NADH + H(+). It catalyses the reaction (S)-2,3,4,5-tetrahydrodipicolinate + NADP(+) + H2O = (2S,4S)-4-hydroxy-2,3,4,5-tetrahydrodipicolinate + NADPH + H(+). Its pathway is amino-acid biosynthesis; L-lysine biosynthesis via DAP pathway; (S)-tetrahydrodipicolinate from L-aspartate: step 4/4. In terms of biological role, catalyzes the conversion of 4-hydroxy-tetrahydrodipicolinate (HTPA) to tetrahydrodipicolinate. The protein is 4-hydroxy-tetrahydrodipicolinate reductase of Janthinobacterium sp. (strain Marseille) (Minibacterium massiliensis).